A 457-amino-acid chain; its full sequence is Tubulin beta chain (457 aa).

GTP contacts are provided by Q11, E69, S138, G142, T143, G144, N204, and N226. A Mg(2+)-binding site is contributed by E69. Phosphoserine is present on residues S278 and S280. Positions 423 to 457 (QQYQEATVEDDEEVDENGDFGAPQNQDEPITENFE) are disordered. Positions 429 to 440 (TVEDDEEVDENG) are enriched in acidic residues.

Belongs to the tubulin family. Dimer of alpha and beta chains. A typical microtubule is a hollow water-filled tube with an outer diameter of 25 nm and an inner diameter of 15 nM. Alpha-beta heterodimers associate head-to-tail to form protofilaments running lengthwise along the microtubule wall with the beta-tubulin subunit facing the microtubule plus end conferring a structural polarity. Microtubules usually have 13 protofilaments but different protofilament numbers can be found in some organisms and specialized cells. Mg(2+) serves as cofactor.

The protein localises to the cytoplasm. It is found in the cytoskeleton. Its function is as follows. Tubulin is the major constituent of microtubules, a cylinder consisting of laterally associated linear protofilaments composed of alpha- and beta-tubulin heterodimers. Microtubules grow by the addition of GTP-tubulin dimers to the microtubule end, where a stabilizing cap forms. Below the cap, tubulin dimers are in GDP-bound state, owing to GTPase activity of alpha-tubulin. The sequence is that of Tubulin beta chain (TUB2) from Saccharomyces cerevisiae (strain ATCC 204508 / S288c) (Baker's yeast).